Here is a 191-residue protein sequence, read N- to C-terminus: Signal peptidase IB (191 aa).

The Cytoplasmic segment spans residues 1-7; the sequence is MKKELLE. A helical membrane pass occupies residues 8–28; it reads WIISIAVAFVILFIVGKFIVT. Residues 29–191 are Extracellular-facing; the sequence is PYTIKGESMD…HNFNPENTKN (163 aa). Catalysis depends on residues S36 and K77.

It belongs to the peptidase S26 family.

The protein localises to the cell membrane. It catalyses the reaction Cleavage of hydrophobic, N-terminal signal or leader sequences from secreted and periplasmic proteins.. Essential for cell viability. This Staphylococcus aureus (strain Mu50 / ATCC 700699) protein is Signal peptidase IB (spsB).